The chain runs to 488 residues: Prostaglandin E2 receptor EP4 subtype (488 aa).

The Extracellular segment spans residues 1-19 (MSIPGVNASFSSTPERLNS). Asparagine 7 carries an N-linked (GlcNAc...) asparagine glycan. A helical membrane pass occupies residues 20-43 (PVTIPAVMFIFGVVGNLVAIVVLC). The Cytoplasmic portion of the chain corresponds to 44-55 (KSRKEQKETTFY). Residues 56–79 (TLVCGLAVTDLLGTLLVSPVTIAT) traverse the membrane as a helical segment. Residues 80 to 96 (YMKGQWPGDQALCDYST) are Extracellular-facing. Cysteine 92 and cysteine 170 are joined by a disulfide. A helical membrane pass occupies residues 97–115 (FILLFFGLSGLSIICAMSI). The Cytoplasmic portion of the chain corresponds to 116–135 (ERYLAINHAYFYSHYVDKRL). A helical membrane pass occupies residues 136-160 (AGLTLFAVYASNVLFCALPNMGLGR). The Extracellular portion of the chain corresponds to 161 to 184 (SERQYPGTWCFIDWTTNVTAYAAF). Residues 185 to 211 (SYMYAGFSSFLILATVLCNVLVCGALL) traverse the membrane as a helical segment. Residues 212-270 (RMLRQFMRRTSLGTEQHHAAAAAAVASVACRGHAAASPALQRLSDFRRRRSFRRIAGAE) lie on the Cytoplasmic side of the membrane. Residues 271–298 (IQMVILLIATSLVVLICSIPLVVRVFIN) form a helical membrane-spanning segment. Residues 299–315 (QLYQPSVVKDISRNPDL) lie on the Extracellular side of the membrane. A helical transmembrane segment spans residues 316-335 (QAIRIASVNPILDPWIYILL). Residues 336–488 (RKTVLSKAIE…ETLKLSEKCI (153 aa)) are Cytoplasmic-facing. Positions 358–380 (GRDGSAQHCSESRRTSSAMSGHS) are disordered. Serine 377, serine 380, serine 382, and serine 385 each carry phosphoserine.

Belongs to the G-protein coupled receptor 1 family. Interacts with FEM1A. In terms of processing, phosphorylation mediates agonist-mediated desensitization by promoting cytoplasmic retention.

Its subcellular location is the cell membrane. Functionally, receptor for prostaglandin E2 (PGE2). The activity of this receptor is mediated by G(s) proteins that stimulate adenylate cyclase. Has a relaxing effect on smooth muscle. May play an important role in regulating renal hemodynamics, intestinal epithelial transport, adrenal aldosterone secretion, and uterine function. This Rattus norvegicus (Rat) protein is Prostaglandin E2 receptor EP4 subtype (Ptger4).